The following is a 263-amino-acid chain: Purine nucleoside phosphorylase SAR1163 (263 aa).

The Zn(2+) site is built by His79, Cys124, and His141.

Belongs to the purine nucleoside phosphorylase YfiH/LACC1 family. In terms of assembly, homodimer. It depends on Cu(2+) as a cofactor. The cofactor is Zn(2+).

The catalysed reaction is adenosine + phosphate = alpha-D-ribose 1-phosphate + adenine. The enzyme catalyses S-methyl-5'-thioadenosine + phosphate = 5-(methylsulfanyl)-alpha-D-ribose 1-phosphate + adenine. It carries out the reaction inosine + phosphate = alpha-D-ribose 1-phosphate + hypoxanthine. It catalyses the reaction adenosine + H2O + H(+) = inosine + NH4(+). Its function is as follows. Purine nucleoside enzyme that catalyzes the phosphorolysis of adenosine and inosine nucleosides, yielding D-ribose 1-phosphate and the respective free bases, adenine and hypoxanthine. Also catalyzes the phosphorolysis of S-methyl-5'-thioadenosine into adenine and S-methyl-5-thio-alpha-D-ribose 1-phosphate. Also has adenosine deaminase activity. This is Purine nucleoside phosphorylase SAR1163 from Staphylococcus aureus (strain MRSA252).